We begin with the raw amino-acid sequence, 467 residues long: Transcriptional modulator WTM2 (467 aa).

Positions 1 to 12 (MAKSKSSQGASG) are enriched in low complexity. 2 disordered regions span residues 1-22 (MAKSKSSQGASGARRKPAPSLY) and 84-121 (TFYDDDDDDDNDDDDEEGNGKTKSAATPNPEYGDAFQD). Acidic residues predominate over residues 87–100 (DDDDDDDNDDDDEE). WD repeat units lie at residues 244–282 (PGTNVAHSVRFFNNHLFASCSDDNILRFWDTRTADKPLW), 287–327 (PKNG…LATT), and 349–389 (SGGD…SRND).

Transcriptional modulator with roles in meiotic regulation and silencing. This chain is Transcriptional modulator WTM2 (WTM2), found in Saccharomyces cerevisiae (strain ATCC 204508 / S288c) (Baker's yeast).